Consider the following 498-residue polypeptide: MSPQTETKASVGFKAGVKDYKLTYYTPDYETKDTDILAAFRVTPQPGVPPEEAGAAVAAESSTGTWTTVWTDGLTSLDRYKGRCYRIERVIGEKDQYIAYVAYPLDLFEEGSVTNLFTSIVGNVFGFKALRALRLEDLRIPPAYTKTFQGPPHGIQVERDKLNKYGRPLLGCTIKPKLGLSAKNYGRAVYECLRGGLDFTKDDENVNSQPFMRWRDRFLFCAEAIYKSQAETGEIKGHYLNATAGTCEEMLKRAFFARELGVPIIMHDYLTGGFTANTSLAHYCRENGLLLHIHRAMHAVIDRQKNHGIHFRVLAKALRLSGGDHIHSGTVVGKLEGEREITLGFVDLLRDDFVEQDRSRGIYFTQDWVSLPGVMPVASGGIHVWHMPALTEIFGDDSVLQFGGGTLGHPWGNAPGAVANRVALEACVQARNEGRDLAQEGNDIIRQAGKWSPELAAACEVWKEIRFDFKPVDTLDPNDKKQRDNEDTLADKFFGDKG.

A propeptide spanning residues 1–2 (MS) is cleaved from the precursor. Position 3 is an N-acetylproline (Pro3). Lys14 carries the N6,N6,N6-trimethyllysine modification. Positions 123 and 173 each coordinate substrate. Lys175 acts as the Proton acceptor in catalysis. Lys177 contributes to the substrate binding site. 3 residues coordinate Mg(2+): Lys201, Asp203, and Glu204. The residue at position 201 (Lys201) is an N6-carboxylysine. His294 functions as the Proton acceptor in the catalytic mechanism. Substrate contacts are provided by Arg295, His327, and Ser379. Residues 473-498 (DTLDPNDKKQRDNEDTLADKFFGDKG) are disordered.

This sequence belongs to the RuBisCO large chain family. Type I subfamily. Heterohexadecamer of 8 large chains and 8 small chains; disulfide-linked. The disulfide link is formed within the large subunit homodimers. It depends on Mg(2+) as a cofactor. In terms of processing, the disulfide bond which can form in the large chain dimeric partners within the hexadecamer appears to be associated with oxidative stress and protein turnover.

It is found in the plastid. It catalyses the reaction 2 (2R)-3-phosphoglycerate + 2 H(+) = D-ribulose 1,5-bisphosphate + CO2 + H2O. The catalysed reaction is D-ribulose 1,5-bisphosphate + O2 = 2-phosphoglycolate + (2R)-3-phosphoglycerate + 2 H(+). Functionally, ruBisCO catalyzes two reactions: the carboxylation of D-ribulose 1,5-bisphosphate, the primary event in carbon dioxide fixation, as well as the oxidative fragmentation of the pentose substrate in the photorespiration process. Both reactions occur simultaneously and in competition at the same active site. In Cuscuta exaltata (Tall dodder), this protein is Ribulose bisphosphate carboxylase large chain.